We begin with the raw amino-acid sequence, 374 residues long: Chaperone protein DnaJ (374 aa).

Residues 4–68 (DYYDILGVSR…ETRARYDRFG (65 aa)) form the J domain. The segment at 133-215 (GGEKQIRITH…CGGNGQAQVT (83 aa)) adopts a CR-type zinc-finger fold. Zn(2+) contacts are provided by C146, C149, C163, C166, C189, C192, C203, and C206. CXXCXGXG motif repeat units follow at residues 146-153 (CTTCNGSG), 163-170 (CGTCGGAG), 189-196 (CPTCNGKG), and 203-210 (CETCGGNG).

The protein belongs to the DnaJ family. As to quaternary structure, homodimer. Requires Zn(2+) as cofactor.

It localises to the cytoplasm. Functionally, participates actively in the response to hyperosmotic and heat shock by preventing the aggregation of stress-denatured proteins and by disaggregating proteins, also in an autonomous, DnaK-independent fashion. Unfolded proteins bind initially to DnaJ; upon interaction with the DnaJ-bound protein, DnaK hydrolyzes its bound ATP, resulting in the formation of a stable complex. GrpE releases ADP from DnaK; ATP binding to DnaK triggers the release of the substrate protein, thus completing the reaction cycle. Several rounds of ATP-dependent interactions between DnaJ, DnaK and GrpE are required for fully efficient folding. Also involved, together with DnaK and GrpE, in the DNA replication of plasmids through activation of initiation proteins. In Cyanothece sp. (strain PCC 7425 / ATCC 29141), this protein is Chaperone protein DnaJ.